Consider the following 66-residue polypeptide: Large ribosomal subunit protein bL35 (66 aa).

The segment covering 1 to 16 (MPKQKTHRASAKRFKR) has biased composition (basic residues). Residues 1 to 21 (MPKQKTHRASAKRFKRTGSGG) form a disordered region.

Belongs to the bacterial ribosomal protein bL35 family.

The polypeptide is Large ribosomal subunit protein bL35 (Streptococcus pneumoniae serotype 2 (strain D39 / NCTC 7466)).